We begin with the raw amino-acid sequence, 117 residues long: Immunoglobulin heavy variable 1-46 (117 aa).

An N-terminal signal peptide occupies residues 1–19 (MDWTWRVFCLLAVAPGAHS). The framework-1 stretch occupies residues 20–44 (QVQLVQSGAEVKKPGASVKVSCKAS). An Ig-like domain is found at 20–117 (QVQLVQSGAE…EDTAVYYCAR (98 aa)). A disulfide bridge connects residues cysteine 41 and cysteine 115. The complementarity-determining-1 stretch occupies residues 45 to 52 (GYTFTSYY). The framework-2 stretch occupies residues 53–69 (MHWVRQAPGQGLEWMGI). The tract at residues 70–77 (INPSGGST) is complementarity-determining-2. A framework-3 region spans residues 78 to 115 (SYAQKFQGRVTMTRDTSTSTVYMELSSLRSEDTAVYYC). The segment at 116-117 (AR) is complementarity-determining-3.

As to quaternary structure, immunoglobulins are composed of two identical heavy chains and two identical light chains; disulfide-linked.

It is found in the secreted. The protein resides in the cell membrane. Its function is as follows. V region of the variable domain of immunoglobulin heavy chains that participates in the antigen recognition. Immunoglobulins, also known as antibodies, are membrane-bound or secreted glycoproteins produced by B lymphocytes. In the recognition phase of humoral immunity, the membrane-bound immunoglobulins serve as receptors which, upon binding of a specific antigen, trigger the clonal expansion and differentiation of B lymphocytes into immunoglobulins-secreting plasma cells. Secreted immunoglobulins mediate the effector phase of humoral immunity, which results in the elimination of bound antigens. The antigen binding site is formed by the variable domain of one heavy chain, together with that of its associated light chain. Thus, each immunoglobulin has two antigen binding sites with remarkable affinity for a particular antigen. The variable domains are assembled by a process called V-(D)-J rearrangement and can then be subjected to somatic hypermutations which, after exposure to antigen and selection, allow affinity maturation for a particular antigen. This Homo sapiens (Human) protein is Immunoglobulin heavy variable 1-46.